A 153-amino-acid polypeptide reads, in one-letter code: Ribosome maturation factor RimP (153 aa).

It belongs to the RimP family.

The protein resides in the cytoplasm. Functionally, required for maturation of 30S ribosomal subunits. This is Ribosome maturation factor RimP from Clostridium botulinum (strain Alaska E43 / Type E3).